The sequence spans 221 residues: 7-cyano-7-deazaguanine synthase (221 aa).

10–20 (FSGGQDSTTCL) contributes to the ATP binding site. Zn(2+) is bound by residues Cys186, Cys195, Cys198, and Cys201.

The protein belongs to the QueC family. As to quaternary structure, homodimer. Zn(2+) is required as a cofactor.

It catalyses the reaction 7-carboxy-7-deazaguanine + NH4(+) + ATP = 7-cyano-7-deazaguanine + ADP + phosphate + H2O + H(+). It participates in purine metabolism; 7-cyano-7-deazaguanine biosynthesis. In terms of biological role, catalyzes the ATP-dependent conversion of 7-carboxy-7-deazaguanine (CDG) to 7-cyano-7-deazaguanine (preQ(0)). The chain is 7-cyano-7-deazaguanine synthase from Geobacillus kaustophilus (strain HTA426).